A 395-amino-acid polypeptide reads, in one-letter code: Ketol-acid reductoisomerase, mitochondrial (395 aa).

A mitochondrion-targeting transit peptide spans 1-47 (MLRTQAARLICNSRVITAKRTFALATRAAAYSRPAARFVKPMITTRG). The KARI N-terminal Rossmann domain occupies 57–246 (VETVYERADW…AIGSGYVYQT (190 aa)). NADP(+) contacts are provided by residues 84-93 (GYGSQGYGQG), 108-113 (RKDGAS), and 146-150 (SDAAQ). Residue histidine 171 is part of the active site. The 148-residue stretch at 247–394 (TFEREVNSDL…KEVRKLRPEN (148 aa)) folds into the KARI C-terminal knotted domain. Aspartate 255, glutamate 259, glutamate 291, and glutamate 295 together coordinate Mg(2+). Residue serine 317 participates in substrate binding. A Phosphoserine modification is found at serine 355. Positions 363-395 (DYREKLEKELDTIRNMEIWKVGKEVRKLRPENQ) are hydrophilic.

Belongs to the ketol-acid reductoisomerase family. Mg(2+) is required as a cofactor.

It localises to the mitochondrion. It catalyses the reaction (2R)-2,3-dihydroxy-3-methylbutanoate + NADP(+) = (2S)-2-acetolactate + NADPH + H(+). It carries out the reaction (2R,3R)-2,3-dihydroxy-3-methylpentanoate + NADP(+) = (S)-2-ethyl-2-hydroxy-3-oxobutanoate + NADPH + H(+). The protein operates within amino-acid biosynthesis; L-isoleucine biosynthesis; L-isoleucine from 2-oxobutanoate: step 2/4. It participates in amino-acid biosynthesis; L-valine biosynthesis; L-valine from pyruvate: step 2/4. Involved in the biosynthesis of branched-chain amino acids (BCAA). Catalyzes the second common step in the parallel biosynthesis of isoleucine and valine. Converts alpha-aceto-alpha-hydroxybutyrate (AHB) to alpha,beta-dihydroxy-beta-methylvalerate (DHMV) and alpha-acetolactate (AL) to alpha,beta-dihydroxy-isovalerate (DHV) in isoleucine and valine biosynthesis, respectively. The protein is Ketol-acid reductoisomerase, mitochondrial of Saccharomyces cerevisiae (strain ATCC 204508 / S288c) (Baker's yeast).